The sequence spans 280 residues: Large ribosomal subunit protein uL2cz/uL2cy (280 aa).

Disordered stretches follow at residues 1 to 25 and 231 to 280; these read MAIH…VKSN and PVDH…RRTK.

Belongs to the universal ribosomal protein uL2 family. Part of the 50S ribosomal subunit.

The protein resides in the plastid. It localises to the chloroplast. The sequence is that of Large ribosomal subunit protein uL2cz/uL2cy (rpl2-A) from Platanus occidentalis (Sycamore).